A 311-amino-acid polypeptide reads, in one-letter code: Olfactory receptor 10J4 (311 aa).

Topologically, residues Met-1–Phe-29 are extracellular. The chain crosses the membrane as a helical span at residues Val-30–Ile-50. At Arg-51 to His-57 the chain is on the cytoplasmic side. A helical membrane pass occupies residues Thr-58–Ile-78. Residues Asn-79 to Cys-98 are Extracellular-facing. Residues Cys-98 and Cys-180 are joined by a disulfide bond. Residues Ala-99–Met-119 form a helical membrane-spanning segment. Over Gly-120–Ser-149 the chain is Cytoplasmic. A helical transmembrane segment spans residues Trp-150–Cys-170. The Extracellular portion of the chain corresponds to Asp-171–Leu-202. Residues Ile-203–Val-223 traverse the membrane as a helical segment. Residues Thr-224 to Lys-237 lie on the Cytoplasmic side of the membrane. The chain crosses the membrane as a helical span at residues Ala-238–Gly-254. Topologically, residues Arg-255–Arg-272 are extracellular. The chain crosses the membrane as a helical span at residues Leu-273–Leu-292. Residues Arg-293–Ser-311 lie on the Cytoplasmic side of the membrane.

This sequence belongs to the G-protein coupled receptor 1 family.

It localises to the cell membrane. Odorant receptor. This chain is Olfactory receptor 10J4 (OR10J4), found in Homo sapiens (Human).